The primary structure comprises 75 residues: UPF0291 protein Teth39_0326 (75 aa).

Belongs to the UPF0291 family.

The protein resides in the cytoplasm. The polypeptide is UPF0291 protein Teth39_0326 (Thermoanaerobacter pseudethanolicus (strain ATCC 33223 / 39E) (Clostridium thermohydrosulfuricum)).